The following is a 395-amino-acid chain: Chorismate synthase (395 aa).

2 residues coordinate NADP(+): R40 and R46. FMN-binding positions include 134 to 136, 256 to 257, G301, 316 to 320, and R342; these read RAS, QA, and KPIST.

This sequence belongs to the chorismate synthase family. Homotetramer. The cofactor is FMNH2.

The catalysed reaction is 5-O-(1-carboxyvinyl)-3-phosphoshikimate = chorismate + phosphate. The protein operates within metabolic intermediate biosynthesis; chorismate biosynthesis; chorismate from D-erythrose 4-phosphate and phosphoenolpyruvate: step 7/7. In terms of biological role, catalyzes the anti-1,4-elimination of the C-3 phosphate and the C-6 proR hydrogen from 5-enolpyruvylshikimate-3-phosphate (EPSP) to yield chorismate, which is the branch point compound that serves as the starting substrate for the three terminal pathways of aromatic amino acid biosynthesis. This reaction introduces a second double bond into the aromatic ring system. The chain is Chorismate synthase from Beutenbergia cavernae (strain ATCC BAA-8 / DSM 12333 / CCUG 43141 / JCM 11478 / NBRC 16432 / NCIMB 13614 / HKI 0122).